Here is a 150-residue protein sequence, read N- to C-terminus: Ribonuclease K6 (150 aa).

The first 23 residues, 1-23 (MVLCFPLLLLVLVLWGQVCPLHA), serve as a signal peptide directing secretion. The active-site Proton acceptor is H38. Disulfide bonds link C46-C104, C60-C114, C78-C129, and C85-C92. N-linked (GlcNAc...) asparagine glycosylation occurs at N55. Substrate contacts are provided by residues 61–65 (KPQNT) and K86. N-linked (GlcNAc...) asparagine glycosylation is present at N100. Position 105 (R105) interacts with substrate. Catalysis depends on H145, which acts as the Proton donor.

Belongs to the pancreatic ribonuclease family. As to quaternary structure, interacts (via N-terminus) with bacterial lipopolysaccharide (LPS).

Its subcellular location is the secreted. It localises to the lysosome. It is found in the cytoplasmic granule. Its function is as follows. Ribonuclease which shows a preference for the pyrimidines uridine and cytosine. Has potent antibacterial activity against a range of Gram-positive and Gram-negative bacteria, including P.aeruginosa, A.baumanii, M.luteus, S.aureus, E.faecalis, E.faecium, S.saprophyticus and E.coli. Causes loss of bacterial membrane integrity, and also promotes agglutination of Gram-negative bacteria. Probably contributes to urinary tract sterility. Bactericidal activity is independent of RNase activity. The sequence is that of Ribonuclease K6 (RNASE6) from Aotus trivirgatus (Three-striped night monkey).